Consider the following 368-residue polypeptide: Type 2 DNA topoisomerase 6 subunit A (368 aa).

Residues 9–148 form the Topo IIA-type catalytic domain; that stretch reads PDTEEAREQL…FHMRPEESGA (140 aa). Residue Tyr103 is the O-(5'-phospho-DNA)-tyrosine intermediate of the active site. Mg(2+)-binding residues include Glu201 and Asp253.

It belongs to the TOP6A family. Homodimer. Heterotetramer of two Top6A and two Top6B chains. Mg(2+) is required as a cofactor.

The enzyme catalyses ATP-dependent breakage, passage and rejoining of double-stranded DNA.. Functionally, relaxes both positive and negative superturns and exhibits a strong decatenase activity. In Haloarcula marismortui (strain ATCC 43049 / DSM 3752 / JCM 8966 / VKM B-1809) (Halobacterium marismortui), this protein is Type 2 DNA topoisomerase 6 subunit A.